Here is a 644-residue protein sequence, read N- to C-terminus: Exoribonuclease 2 (644 aa).

Residues 189–516 enclose the RNB domain; the sequence is RRDLTALDFV…NHRLLKAIIK (328 aa). The S1 motif domain occupies 561–643; it reads DTRFAAEIID…ETRSIIARPA (83 aa).

Belongs to the RNR ribonuclease family. RNase II subfamily.

The protein localises to the cytoplasm. It catalyses the reaction Exonucleolytic cleavage in the 3'- to 5'-direction to yield nucleoside 5'-phosphates.. Its function is as follows. Involved in mRNA degradation. Hydrolyzes single-stranded polyribonucleotides processively in the 3' to 5' direction. In Klebsiella pneumoniae subsp. pneumoniae (strain ATCC 700721 / MGH 78578), this protein is Exoribonuclease 2.